The sequence spans 159 residues: Phosphopantetheine adenylyltransferase (159 aa).

T10 is a binding site for substrate. ATP-binding positions include 10–11 (TF) and H18. The substrate site is built by K42, L74, and R88. Residues 89–91 (GMR), E99, and 124–130 (WSYVSST) contribute to the ATP site.

This sequence belongs to the bacterial CoaD family. Homohexamer. Requires Mg(2+) as cofactor.

The protein resides in the cytoplasm. The catalysed reaction is (R)-4'-phosphopantetheine + ATP + H(+) = 3'-dephospho-CoA + diphosphate. Its pathway is cofactor biosynthesis; coenzyme A biosynthesis; CoA from (R)-pantothenate: step 4/5. Its function is as follows. Reversibly transfers an adenylyl group from ATP to 4'-phosphopantetheine, yielding dephospho-CoA (dPCoA) and pyrophosphate. The sequence is that of Phosphopantetheine adenylyltransferase from Mannheimia succiniciproducens (strain KCTC 0769BP / MBEL55E).